Consider the following 264-residue polypeptide: S-adenosylmethionine decarboxylase proenzyme (264 aa).

Ser-112 functions as the Schiff-base intermediate with substrate; via pyruvic acid in the catalytic mechanism. Ser-112 bears the Pyruvic acid (Ser); by autocatalysis mark. Catalysis depends on His-117, which acts as the Proton acceptor; for processing activity. The active-site Proton donor; for catalytic activity is the Cys-140.

The protein belongs to the prokaryotic AdoMetDC family. Type 2 subfamily. In terms of assembly, heterooctamer of four alpha and four beta chains arranged as a tetramer of alpha/beta heterodimers. Pyruvate serves as cofactor. In terms of processing, is synthesized initially as an inactive proenzyme. Formation of the active enzyme involves a self-maturation process in which the active site pyruvoyl group is generated from an internal serine residue via an autocatalytic post-translational modification. Two non-identical subunits are generated from the proenzyme in this reaction, and the pyruvate is formed at the N-terminus of the alpha chain, which is derived from the carboxyl end of the proenzyme. The post-translation cleavage follows an unusual pathway, termed non-hydrolytic serinolysis, in which the side chain hydroxyl group of the serine supplies its oxygen atom to form the C-terminus of the beta chain, while the remainder of the serine residue undergoes an oxidative deamination to produce ammonia and the pyruvoyl group blocking the N-terminus of the alpha chain.

The enzyme catalyses S-adenosyl-L-methionine + H(+) = S-adenosyl 3-(methylsulfanyl)propylamine + CO2. It functions in the pathway amine and polyamine biosynthesis; S-adenosylmethioninamine biosynthesis; S-adenosylmethioninamine from S-adenosyl-L-methionine: step 1/1. In terms of biological role, catalyzes the decarboxylation of S-adenosylmethionine to S-adenosylmethioninamine (dcAdoMet), the propylamine donor required for the synthesis of the polyamines spermine and spermidine from the diamine putrescine. The chain is S-adenosylmethionine decarboxylase proenzyme from Klebsiella pneumoniae (strain 342).